Here is a 126-residue protein sequence, read N- to C-terminus: Glycine cleavage system H protein (126 aa).

The region spanning 22 to 104 (VAYVGITDYA…YGEGWLIKMK (83 aa)) is the Lipoyl-binding domain. At lysine 63 the chain carries N6-lipoyllysine.

The protein belongs to the GcvH family. The glycine cleavage system is composed of four proteins: P, T, L and H. It depends on (R)-lipoate as a cofactor.

Functionally, the glycine cleavage system catalyzes the degradation of glycine. The H protein shuttles the methylamine group of glycine from the P protein to the T protein. The protein is Glycine cleavage system H protein of Bacteroides fragilis (strain ATCC 25285 / DSM 2151 / CCUG 4856 / JCM 11019 / LMG 10263 / NCTC 9343 / Onslow / VPI 2553 / EN-2).